A 163-amino-acid polypeptide reads, in one-letter code: Ribonuclease H (163 aa).

An RNase H type-1 domain is found at 1 to 142 (MRKQVAIFTD…CDELARTAAC (142 aa)). Mg(2+) is bound by residues aspartate 10, glutamate 48, aspartate 70, and aspartate 134.

It belongs to the RNase H family. In terms of assembly, monomer. Requires Mg(2+) as cofactor.

The protein resides in the cytoplasm. The catalysed reaction is Endonucleolytic cleavage to 5'-phosphomonoester.. Functionally, endonuclease that specifically degrades the RNA of RNA-DNA hybrids. This is Ribonuclease H from Sodalis glossinidius (strain morsitans).